Consider the following 1148-residue polypeptide: Envelopment polyprotein (1148 aa).

The signal sequence occupies residues 1–23 (MGELSPVCLCLLLQGLLLCNTGA). Residues 24–496 (ARNLNELKME…PGLHGWATML (473 aa)) are Lumenal-facing. Cystine bridges form between Cys34–Cys159, Cys68–Cys165, Cys117–Cys136, Cys141–Cys146, Cys183–Cys193, and Cys218–Cys257. Asn142 is a glycosylation site (N-linked (GlcNAc...) asparagine; by host). A glycan (N-linked (GlcNAc...) asparagine; by host) is linked at Asn357. Intrachain disulfides connect Cys386-Cys445, Cys390-Cys399, Cys415-Cys434, and Cys462-Cys485. Asn409 is a glycosylation site (N-linked (GlcNAc...) asparagine; by host). The helical transmembrane segment at 497–517 (LLLTFCFGWVLIPTITMILLK) threads the bilayer. Over 518-637 (ILIAFAYLCS…LSLFRYRSRF (120 aa)) the chain is Cytoplasmic. The segment at 526-543 (CSKYNTDSKFRILIEKVK) is binding to the ribonucleoprotein. 2 consecutive CCHC-type zinc fingers follow at residues 555–575 (CEVC…RKSC) and 580–601 (CPYC…FKVC). Binding to the ribonucleoprotein stretches follow at residues 598-615 (FKVC…RKSL), 602-613 (KLTSRFQENLRK), and 621-635 (MQGC…RYRS). In terms of domain architecture, ITAM spans 621 to 644 (MQGCYRTLSLFRYRSRFFVGLVWC). Residues 625–628 (YRTL) carry the YxxL motif. A helical membrane pass occupies residues 638 to 658 (FVGLVWCVLLVLELIVWAASA). The Lumenal segment spans residues 659–1115 (ETQNLNAGWT…WILGVLNGNW (457 aa)). 8 disulfides stabilise this stretch: Cys745–Cys780, Cys749–Cys787, Cys761–Cys894, Cys775–Cys905, Cys790–Cys913, Cys816–Cys825, Cys833–Cys842, and Cys873–Cys877. The interval 767 to 787 (YEYETGWGCNPPDCPGVGTGC) is fusion loop. Residue Asn937 is glycosylated (N-linked (GlcNAc...) asparagine; by host). Cystine bridges form between Cys979-Cys1009, Cys1002-Cys1054, Cys1019-Cys1024, Cys1055-Cys1060, and Cys1094-Cys1098. Residues 1116–1136 (MVVAVLVVLLILSILLFTLCC) form a helical membrane-spanning segment. Binding to the ribonucleoprotein regions lie at residues 1131–1143 (LFTL…PSYR) and 1131–1148 (LFTL…EHKP). Residues 1137–1148 (PRRPSYRKEHKP) are Cytoplasmic-facing.

This sequence belongs to the hantavirus envelope glycoprotein family. In terms of assembly, homodimer. Homotetramer; forms heterotetrameric Gn-Gc spikes in the pre-fusion conformation. Interacts (via C-terminus) with the nucleoprotein. Interacts with host TUFM; this interaction contributes to the virus-induced degradation of mitochondria by autophagy, which leads to degradation of host MAVS and inhibition of type I interferon (IFN) responses. Interacts with host MAP1LC3B; this interaction contributes to the virus-induced degradation of mitochondria by autophagy, which leads to degradation of host MAVS and inhibition of type I interferon (IFN) responses. Homodimer. Homotetramer; forms heterotetrameric Gn-Gc spikes in the pre-fusion conformation. Homotrimer; forms homotrimer in the post-fusion conformation at acidic pH. Interacts (via C-terminus) with the nucleoprotein. Post-translationally, envelope polyprotein precursor is quickly cleaved in vivo just after synthesis, presumably by host signal peptidase.

It is found in the virion membrane. The protein resides in the host cell surface. Its subcellular location is the host Golgi apparatus membrane. The protein localises to the host endoplasmic reticulum membrane. It localises to the host mitochondrion. Forms homotetramers with glycoprotein C at the surface of the virion. Attaches the virion to host cell receptors including integrin ITGAV/ITGB3. This attachment induces virion internalization predominantly through clathrin-dependent endocytosis. Mediates the assembly and budding of infectious virus particles through its interaction with the nucleocapsid protein and the viral genome. May dysregulate normal immune and endothelial cell responses through an ITAM motif. Translocates to mitochondria, binds to host TUFM and recruits MAP1LC3B. These interactions induce mitochondrial autophagy and therefore destruction of host MAVS leading to inhibition of type I interferon (IFN) responses. Concomitant breakdown of glycoprotein N is apparently prevented by the nucleoprotein that may inhibit Gn-stimulated autophagosome-lysosome fusion. Interacts with the viral genomic RNA. In terms of biological role, forms homotetramers with glycoprotein N at the surface of the virion. Attaches the virion to host cell receptors including integrin ITGAV/ITGB3. This attachment induces virion internalization predominantly through clathrin-dependent endocytosis. Class II fusion protein that promotes fusion of viral membrane with host endosomal membrane after endocytosis of the virion. The polypeptide is Envelopment polyprotein (GP) (Homo sapiens (Human)).